The chain runs to 209 residues: Large ribosomal subunit protein uL3 (209 aa).

Gln-150 is subject to N5-methylglutamine.

The protein belongs to the universal ribosomal protein uL3 family. Part of the 50S ribosomal subunit. Forms a cluster with proteins L14 and L19. In terms of processing, methylated by PrmB.

One of the primary rRNA binding proteins, it binds directly near the 3'-end of the 23S rRNA, where it nucleates assembly of the 50S subunit. The protein is Large ribosomal subunit protein uL3 of Ectopseudomonas mendocina (strain ymp) (Pseudomonas mendocina).